A 213-amino-acid polypeptide reads, in one-letter code: Cytochrome c biogenesis ATP-binding export protein CcmA (213 aa).

The ABC transporter domain maps to 3 to 211; that stretch reads LTAENLGVRR…QMTGFAGVET (209 aa). 35–42 lines the ATP pocket; that stretch reads GRNGSGKS.

It belongs to the ABC transporter superfamily. CcmA exporter (TC 3.A.1.107) family. The complex is composed of two ATP-binding proteins (CcmA) and two transmembrane proteins (CcmB).

Its subcellular location is the cell inner membrane. The enzyme catalyses heme b(in) + ATP + H2O = heme b(out) + ADP + phosphate + H(+). Part of the ABC transporter complex CcmAB involved in the biogenesis of c-type cytochromes; once thought to export heme, this seems not to be the case, but its exact role is uncertain. Responsible for energy coupling to the transport system. The protein is Cytochrome c biogenesis ATP-binding export protein CcmA of Agrobacterium fabrum (strain C58 / ATCC 33970) (Agrobacterium tumefaciens (strain C58)).